A 598-amino-acid polypeptide reads, in one-letter code: Aspartate--tRNA(Asp/Asn) ligase (598 aa).

An L-aspartate-binding site is contributed by Glu172. The interval 196–199 (QLFK) is aspartate. Arg218 is a binding site for L-aspartate. ATP is bound by residues 218–220 (RDE) and Gln227. His454 provides a ligand contact to L-aspartate. ATP is bound at residue Glu488. Arg495 lines the L-aspartate pocket. 540–543 (GLDR) contributes to the ATP binding site.

This sequence belongs to the class-II aminoacyl-tRNA synthetase family. Type 1 subfamily. In terms of assembly, homodimer.

It is found in the cytoplasm. It carries out the reaction tRNA(Asx) + L-aspartate + ATP = L-aspartyl-tRNA(Asx) + AMP + diphosphate. Functionally, aspartyl-tRNA synthetase with relaxed tRNA specificity since it is able to aspartylate not only its cognate tRNA(Asp) but also tRNA(Asn). Reaction proceeds in two steps: L-aspartate is first activated by ATP to form Asp-AMP and then transferred to the acceptor end of tRNA(Asp/Asn). The protein is Aspartate--tRNA(Asp/Asn) ligase of Leptothrix cholodnii (strain ATCC 51168 / LMG 8142 / SP-6) (Leptothrix discophora (strain SP-6)).